A 506-amino-acid polypeptide reads, in one-letter code: 5'-3' exonuclease PLD4 (506 aa).

The helical transmembrane segment at 31-51 (LQVLGALAVLWLGSVALICLL) threads the bilayer. Cys94 and Cys250 are joined by a disulfide. Asn150 and Asn171 each carry an N-linked (GlcNAc...) asparagine glycan. In terms of domain architecture, PLD phosphodiesterase 1 spans 209–236 (TRGVLHSKFWVVDGRHIYMGSANMDWRS). Catalysis depends on His214, which acts as the Proton donor. Active-site residues include Lys216 and Asp221. Residues Asn249, Asn281, Asn403, Asn417, and Asn427 are each glycosylated (N-linked (GlcNAc...) asparagine). Residues Cys379 and Cys502 are joined by a disulfide bond. The PLD phosphodiesterase 2 domain occupies 423–449 (FSRVNHSKFMVTEKAAYIGTSNWSEDY). Catalysis depends on His428, which acts as the Nucleophile. N-linked (GlcNAc...) asparagine glycosylation is present at Asn444.

It belongs to the phospholipase D family. In terms of assembly, homodimer. In terms of processing, highly N-glycosylated. Expressed in plasmacytoid dendritic cells and monocytes (at protein level).

The protein resides in the endoplasmic reticulum membrane. Its subcellular location is the golgi apparatus. The protein localises to the trans-Golgi network membrane. It localises to the nucleus. It is found in the early endosome. The protein resides in the cytoplasmic vesicle. Its subcellular location is the phagosome. The protein localises to the lysosome. The catalysed reaction is Exonucleolytic cleavage in the 5'- to 3'-direction to yield nucleoside 3'-phosphates.. It catalyses the reaction a 5'-end 5'-dephospho-ribonucleotidyl-ribonucleotide-RNA + H2O = a ribonucleoside 3'-phosphate + a 5'-end dephospho-ribonucleoside-RNA + H(+). The enzyme catalyses a ribonucleoside 3'-phosphate-2'-3'-cyclophospho-GMP + H2O = a ribonucleoside 3'-phosphate + 2',3'-cyclophospho-GMP + H(+). It carries out the reaction a 5'-end 5'-dephospho-2'-deoxyribonucleotidyl-2'-deoxyribonucleotide in single-stranded DNA + H2O = a 5'-end dephospho-2'-deoxyribonucleoside in single-stranded DNA + a 2'-deoxyribonucleoside 3'-phosphate + H(+). The catalysed reaction is a 5'-end 5'-phospho-2'-deoxyribonucleotide in single-stranded DNA + H2O = a 5'-end 5'-dephospho-2'-deoxyribonucleotide in single-stranded DNA + phosphate. It catalyses the reaction a 3-lyso-sn-glycero-1-phospho-(3'-acyl-1'-sn-glycerol) + a 1-acyl-sn-glycerol = a 3-acyl-sn-glycero-1-phospho-(3'-acyl-1'-sn-glycerol) + glycerol. The enzyme catalyses 3-lyso-sn-glycero-1-phospho-(3'-(9Z-octadecenoyl)-1'-sn-glycerol) + 1-(9Z-octadecenoyl)-sn-glycerol = 3-(9Z-octadecenoyl)-sn-glycero-1-phospho-(3'-(9Z-octadecenoyl)-1'-sn-glycerol) + glycerol. With respect to regulation, the exonuclease activity toward ssDNA substrate is Ca(2+) and Mg(2+)-independent, but it is inhibited by Fe(2+), Cu(2+) and to a lesser extent Zn(2+) ions. In terms of biological role, 5'-&gt;3' exonuclease that hydrolyzes the phosphodiester bond of single-stranded DNA (ssDNA) and RNA molecules to form nucleoside 3'-monophosphates and 5'-end 5'-hydroxy deoxyribonucleotide/ribonucleotide fragments. Partially redundant with PLD3, can cleave all four nucleotides displaying higher efficiency for ssDNA and RNA fragments initiated with uridine and guanosine residues and lower efficiency for cytidine-initiated substrates. As a result, it does not always degrade polynucleotides to the single nucleotide level, it can stall at specific sites sparing certain fragments from exonucleolytic degradation. Processes self and pathogenic ssDNA and RNA molecules that reach the endolysosomal compartment via phagocytosis or autophagy and may serve as 'danger' signals for recognition by innate immune receptors such as toll-like receptors (TLRs). Degrades mitochondrial CpG-rich ssDNA fragments to prevent TLR9 activation and autoinflammatory response, but it can cleave viral RNA to generate ligands for TLR7 activation and initiate antiviral immune responses. In plasmacytoid dendritic cells, it cooperates with endonuclease RNASET2 to release 2',3'-cyclic guanosine monophosphate (2',3'-cGMP), a potent stimulatory ligand for TLR7. Produces 2',3'-cGMPs and cytidine-rich RNA fragments that occupy TLR7 ligand-binding pockets and trigger a signaling-competent state. Can exert polynucleotide phosphatase activity toward 5'-phosphorylated ssDNA substrates although at a slow rate. Transphosphatidylase that catalyzes the exchange with R to S stereo-inversion of the glycerol moiety between (S,R)-lysophosphatidylglycerol (LPG) and monoacylglycerol (MAG) substrates to yield (S,S)-bis(monoacylglycero)phosphate (BMP). Can synthesize a variety of (S,S)-BMPs representing the main phospholipid constituent of lysosomal intralumenal vesicle (ILV) membranes that bind acid hydrolases for lipid degradation. Regulates the homeostasis and interorganellar communication of the endolysosomal system with an overall impact on cellular removal of dysfunctional organelles via autophagy as well as proper protein and lipid turnover. May play a role in myotube formation in response to ER stress. This Homo sapiens (Human) protein is 5'-3' exonuclease PLD4.